Consider the following 87-residue polypeptide: DNA-directed RNA polymerase subunit omega (87 aa).

Belongs to the RNA polymerase subunit omega family. In terms of assembly, the RNAP catalytic core consists of 2 alpha, 1 beta, 1 beta' and 1 omega subunit. When a sigma factor is associated with the core the holoenzyme is formed, which can initiate transcription.

It carries out the reaction RNA(n) + a ribonucleoside 5'-triphosphate = RNA(n+1) + diphosphate. Promotes RNA polymerase assembly. Latches the N- and C-terminal regions of the beta' subunit thereby facilitating its interaction with the beta and alpha subunits. In Leifsonia xyli subsp. xyli (strain CTCB07), this protein is DNA-directed RNA polymerase subunit omega.